The chain runs to 502 residues: Vicilin Jug r 6.0101 (502 aa).

Positions 1 to 27 are cleaved as a signal peptide; that stretch reads MAFKPKIPIALLLLTSLLAICAGLALA. Over residues 67–84 the composition is skewed to basic and acidic residues; sequence ARERAERRRSEEGSSREE. Positions 67-100 are disordered; the sequence is ARERAERRRSEEGSSREEGYEEEELGGEREEENP. Residues 85–100 show a composition bias toward acidic residues; the sequence is GYEEEELGGEREEENP. 2 consecutive Cupin type-1 domains span residues 101–259 and 302–475; these read YVFE…DQLE and FNLF…REVE. A glycan (N-linked (GlcNAc...) asparagine) is linked at Asn-340. Positions 374-401 are disordered; the sequence is HLSSSGSRGQREGSGSSRRRSRSGPSYQ. Positions 376–389 are enriched in low complexity; the sequence is SSSGSRGQREGSGS.

The protein belongs to the 7S seed storage protein family. As to quaternary structure, homotrimer. Post-translationally, N-glycosylated; paucimannose-type structures containing xylose. As to expression, expressed in seed (at protein level).

Seed storage protein. The sequence is that of Vicilin Jug r 6.0101 from Juglans regia (English walnut).